Reading from the N-terminus, the 486-residue chain is N-succinylglutamate 5-semialdehyde dehydrogenase (486 aa).

Position 220–225 (220–225) interacts with NAD(+); sequence GSSRTG. Active-site residues include Glu-243 and Cys-277.

This sequence belongs to the aldehyde dehydrogenase family. AstD subfamily.

The catalysed reaction is N-succinyl-L-glutamate 5-semialdehyde + NAD(+) + H2O = N-succinyl-L-glutamate + NADH + 2 H(+). Its pathway is amino-acid degradation; L-arginine degradation via AST pathway; L-glutamate and succinate from L-arginine: step 4/5. Catalyzes the NAD-dependent reduction of succinylglutamate semialdehyde into succinylglutamate. This chain is N-succinylglutamate 5-semialdehyde dehydrogenase, found in Shewanella baltica (strain OS223).